The sequence spans 474 residues: MKKYDRGWASLETGAALLIVMLLIAWGAGIWQDYIQTKGWQTEARLVSNWTSAARSYIGKNYTTLQGSSTTTTPAVITTTMLKNTGFLSSGFTETNSEGQRLQAYVVRNAQNPELLQAMVVSSGGTPYPVKALIQMAKDITTGLGGYIQDGKTATGALRSWSVALSNYGAKSGNGHIAVLLSTDELSGAAEDTDRLYRFQVNGRPDLNKMHTAIDMGSNNLNNVGAVNAQTGNFSGNVNGVNGTFSGQVKGNSGNFDVNVTAGGDIRSNNGWLITRNSKGWLNETHGGGFYMSDGSWVRSVNNKGIYTGGQVKGGTVRADGRLYTGEYLQLERTAVAGASCSPNGLVGRDNTGAILSCQSGTWKTSGSLNGSYTNLGSHRGSFSGRNSGGSTLFIYASGGNGGSAGGACANTSRLQGYVGGTLISVNASNNPAYGKTAFISFAVPAGTSYQITSYPTENTSCGAGVFSVFGYQT.

The tract at residues M1–G361 is constant region. The tract at residues T362–T474 is variable region.

The sequence is that of Shufflon protein A from Escherichia coli.